Reading from the N-terminus, the 220-residue chain is CDP-diacylglycerol--inositol 3-phosphatidyltransferase (220 aa).

The Cytoplasmic portion of the chain corresponds to 1-20 (MSSNSTPEKVTAEHVLWYIP). Residues 21–41 (NKIGYVRVITAALSFFVMKNH) form a helical membrane-spanning segment. Over 42-45 (PTAF) the chain is Lumenal. A helical transmembrane segment spans residues 46 to 66 (TWLYSTSCLLDALDGTMARKY). Aspartate 56 and aspartate 59 together coordinate Mg(2+). Residues glycine 60, arginine 64, and serine 70 each contribute to the a CDP-1,2-diacyl-sn-glycerol site. Residues 67-75 (NQVSSLGAV) lie on the Cytoplasmic side of the membrane. The chain crosses the membrane as a helical span at residues 76 to 96 (LDMVTDRSSTAGLMCFLCVQY). Mg(2+) is bound by residues aspartate 77 and aspartate 81. Catalysis depends on aspartate 81, which acts as the Proton acceptor. The Lumenal segment spans residues 97 to 98 (PQ). The helical transmembrane segment at 99 to 119 (WCVFFQLMLGLDITSHYMHMY) threads the bilayer. Residues 120 to 145 (ASLSAGKTSHKSVGEGESRLLHLYYT) are Cytoplasmic-facing. Residues 146 to 166 (RRDVLFTICAFNELFYAGLYL) traverse the membrane as a helical segment. Topologically, residues 167-170 (QLFS) are lumenal. A helical transmembrane segment spans residues 171 to 191 (NSATFGKWTTIISFPGYVFKQ). The Cytoplasmic portion of the chain corresponds to 192-220 (TANVVQLKRAALILADNDAKNANEKNKTY).

The protein belongs to the CDP-alcohol phosphatidyltransferase class-I family. Mn(2+) is required as a cofactor. It depends on Mg(2+) as a cofactor.

The protein resides in the microsome membrane. Its subcellular location is the endoplasmic reticulum membrane. It is found in the golgi apparatus membrane. It localises to the mitochondrion outer membrane. The catalysed reaction is a CDP-1,2-diacyl-sn-glycerol + myo-inositol = a 1,2-diacyl-sn-glycero-3-phospho-(1D-myo-inositol) + CMP + H(+). Catalyzes the synthesis of phosphatidylinositol (PtdIns). This chain is CDP-diacylglycerol--inositol 3-phosphatidyltransferase, found in Saccharomyces cerevisiae (strain ATCC 204508 / S288c) (Baker's yeast).